Reading from the N-terminus, the 147-residue chain is ATP synthase subunit 9, mitochondrial (147 aa).

A mitochondrion-targeting transit peptide spans 1–66 (MASTRVLASR…TTRQAFQKRA (66 aa)). The next 2 helical transmembrane spans lie at 86–106 (SAAI…AALL) and 123–143 (AILG…VALM).

It belongs to the ATPase C chain family. In terms of assembly, F-type ATPases have 2 components, CF(1) - the catalytic core - and CF(0) - the membrane proton channel. CF(1) has five subunits: alpha(3), beta(3), gamma(1), delta(1), epsilon(1). CF(0) has three main subunits: a, b and c.

The protein resides in the mitochondrion membrane. Its function is as follows. Mitochondrial membrane ATP synthase (F(1)F(0) ATP synthase or Complex V) produces ATP from ADP in the presence of a proton gradient across the membrane which is generated by electron transport complexes of the respiratory chain. F-type ATPases consist of two structural domains, F(1) - containing the extramembraneous catalytic core and F(0) - containing the membrane proton channel, linked together by a central stalk and a peripheral stalk. During catalysis, ATP synthesis in the catalytic domain of F(1) is coupled via a rotary mechanism of the central stalk subunits to proton translocation. Part of the complex F(0) domain. A homomeric c-ring of probably 10 subunits is part of the complex rotary element. The chain is ATP synthase subunit 9, mitochondrial (oli) from Neurospora crassa (strain ATCC 24698 / 74-OR23-1A / CBS 708.71 / DSM 1257 / FGSC 987).